Consider the following 1366-residue polypeptide: DNA-directed RNA polymerase subunit beta (1366 aa).

The protein belongs to the RNA polymerase beta chain family. As to quaternary structure, the RNAP catalytic core consists of 2 alpha, 1 beta, 1 beta' and 1 omega subunit. When a sigma factor is associated with the core the holoenzyme is formed, which can initiate transcription.

It catalyses the reaction RNA(n) + a ribonucleoside 5'-triphosphate = RNA(n+1) + diphosphate. In terms of biological role, DNA-dependent RNA polymerase catalyzes the transcription of DNA into RNA using the four ribonucleoside triphosphates as substrates. This Polynucleobacter asymbioticus (strain DSM 18221 / CIP 109841 / QLW-P1DMWA-1) (Polynucleobacter necessarius subsp. asymbioticus) protein is DNA-directed RNA polymerase subunit beta.